Here is a 302-residue protein sequence, read N- to C-terminus: Late embryogenesis abundant protein D-29 (302 aa).

Disordered regions lie at residues 25 to 93, 168 to 193, and 205 to 302; these read HMPS…AKEY, VKNAAKGKSSEMRQATTEKARELADS, and AKEK…NHKN. Composition is skewed to basic and acidic residues over residues 34–70 and 79–93; these read RDYSKLKTKTEEATDEHHSRTQQAKDELKSKADHAAN and AKDRASEVGKEAKEY. The segment covering 205–286 has biased composition (basic and acidic residues); sequence AKEKVRDMAD…KAEETIESAK (82 aa).

This sequence belongs to the LEA type 1 family.

LEA protein are late embryonic proteins abundant in higher plant seed embryos. There are two subsets of LEA proteins (5a and 5b), the first ones are expressed when the cotyledon weight reach 80 mg and the second set are expressed above 100 mg. The function of those proteins is not known. This chain is Late embryogenesis abundant protein D-29, found in Gossypium hirsutum (Upland cotton).